We begin with the raw amino-acid sequence, 88 residues long: Sec-independent protein translocase protein TatA (88 aa).

Residues 3-23 (IFGVGLPEVTVILILALLIFG) form a helical membrane-spanning segment. The span at 56–66 (MKEEDKDESPK) shows a compositional bias: basic and acidic residues. The disordered stretch occupies residues 56-88 (MKEEDKDESPKSIESNQSNEINQEKIDSENSNN). Residues 67–76 (SIESNQSNEI) are compositionally biased toward polar residues. Residues 77 to 88 (NQEKIDSENSNN) show a composition bias toward basic and acidic residues.

This sequence belongs to the TatA/E family. In terms of assembly, forms a complex with TatC.

The protein localises to the cell inner membrane. In terms of biological role, part of the twin-arginine translocation (Tat) system that transports large folded proteins containing a characteristic twin-arginine motif in their signal peptide across membranes. TatA could form the protein-conducting channel of the Tat system. The protein is Sec-independent protein translocase protein TatA of Prochlorococcus marinus (strain MIT 9301).